Reading from the N-terminus, the 246-residue chain is tRNA (guanine-N(7)-)-methyltransferase (246 aa).

Glu-77, Glu-102, Asp-129, and Asp-152 together coordinate S-adenosyl-L-methionine. Residue Asp-152 is part of the active site. Residues Lys-156, Asp-188, and 225–228 (TKFE) contribute to the substrate site.

This sequence belongs to the class I-like SAM-binding methyltransferase superfamily. TrmB family.

The catalysed reaction is guanosine(46) in tRNA + S-adenosyl-L-methionine = N(7)-methylguanosine(46) in tRNA + S-adenosyl-L-homocysteine. Its pathway is tRNA modification; N(7)-methylguanine-tRNA biosynthesis. Catalyzes the formation of N(7)-methylguanine at position 46 (m7G46) in tRNA. The polypeptide is tRNA (guanine-N(7)-)-methyltransferase (Haemophilus influenzae (strain PittEE)).